The chain runs to 398 residues: 1-deoxy-D-xylulose 5-phosphate reductoisomerase (398 aa).

Positions 10, 11, 12, 13, 37, 38, and 124 each coordinate NADPH. Lysine 125 is a 1-deoxy-D-xylulose 5-phosphate binding site. Position 126 (glutamate 126) interacts with NADPH. Residue aspartate 150 coordinates Mn(2+). 1-deoxy-D-xylulose 5-phosphate contacts are provided by serine 151, glutamate 152, serine 186, and histidine 209. Glutamate 152 contacts Mn(2+). Glycine 215 provides a ligand contact to NADPH. 1-deoxy-D-xylulose 5-phosphate contacts are provided by serine 222, asparagine 227, lysine 228, and glutamate 231. Residue glutamate 231 coordinates Mn(2+).

Belongs to the DXR family. As to quaternary structure, homodimer. It depends on Mg(2+) as a cofactor. Requires Mn(2+) as cofactor.

The catalysed reaction is 2-C-methyl-D-erythritol 4-phosphate + NADP(+) = 1-deoxy-D-xylulose 5-phosphate + NADPH + H(+). The protein operates within isoprenoid biosynthesis; isopentenyl diphosphate biosynthesis via DXP pathway; isopentenyl diphosphate from 1-deoxy-D-xylulose 5-phosphate: step 1/6. Catalyzes the NADPH-dependent rearrangement and reduction of 1-deoxy-D-xylulose-5-phosphate (DXP) to 2-C-methyl-D-erythritol 4-phosphate (MEP). The protein is 1-deoxy-D-xylulose 5-phosphate reductoisomerase of Buchnera aphidicola subsp. Acyrthosiphon pisum (strain 5A).